Reading from the N-terminus, the 1367-residue chain is Probable serine/threonine-protein kinase pkgA (1367 aa).

4 disordered regions span residues 140-164 (IDEN…NKTI), 264-429 (KNGK…LLSR), 456-556 (PTPL…SRKP), and 771-792 (PREE…SDPV). Positions 143-162 (NNNNNNNNNNNNNNNNNKNK) are enriched in low complexity. A compositionally biased stretch (pro residues) spans 271 to 282 (IKRPSPPLPPPQ). Basic and acidic residues predominate over residues 287 to 326 (EQQKEQKEQQKEQQKEQQKEQQKEQEQKQQEPQKYVKFEI). Over residues 340–381 (ISSSNISNEISKQQQQQQQQQQQQQQQQQQQQQQQQQQQQQQ) the composition is skewed to low complexity. The segment covering 399–421 (ANNNILTTPLSSQPTQSLETPST) has biased composition (polar residues). The segment covering 506-517 (GEDEEEDEDDDN) has biased composition (acidic residues). Basic residues predominate over residues 531–544 (LKNKRPFKKTHVHH). Positions 810–1236 (FEFIKPITKG…AEEIKSHPFF (427 aa)) constitute a Protein kinase domain. ATP contacts are provided by residues 816 to 824 (ITKGGYGKV) and Lys839. The active-site Proton acceptor is Asp933. Disordered stretches follow at residues 971–1034 (FSPT…PSNT), 1084–1134 (FIPP…HNIH), and 1288–1312 (QNQN…TATA). Residues 979 to 1015 (NNQSSSSSSVSNIGGSNTIGSNISSTNNNNNNNNTTG) show a composition bias toward low complexity. Positions 1025-1034 (NTETPIPSNT) are enriched in polar residues. 2 stretches are compositionally biased toward low complexity: residues 1092-1125 (QQPI…QQTT) and 1294-1312 (SSTI…TATA). The region spanning 1237–1347 (KSINWKTILT…VNFQSLLELN (111 aa)) is the AGC-kinase C-terminal domain.

This sequence belongs to the protein kinase superfamily. AGC Ser/Thr protein kinase family.

It carries out the reaction L-seryl-[protein] + ATP = O-phospho-L-seryl-[protein] + ADP + H(+). The catalysed reaction is L-threonyl-[protein] + ATP = O-phospho-L-threonyl-[protein] + ADP + H(+). The sequence is that of Probable serine/threonine-protein kinase pkgA (pkgA) from Dictyostelium discoideum (Social amoeba).